We begin with the raw amino-acid sequence, 269 residues long: MAASAGAGAVIAAPDSRRWLWSVLAAALGLLTAGVSALEVYTPKEIFVANGTQGKLTCKFKSTSTTGGLTSVSWSFQPEGADTTVSFFHYSQGQVYLGNYPPFKDRISWAGDLDKKDASINIENMQFIHNGTYICDVKNPPDIVVQPGHIRLYVVEKENLPVFPVWVVVGIVTAVVLGLTLLISMILAVLYRRKNSKRDYTGCSTSESLSPVKQAPRKSPSDTEGLVKSLPSGSHQGPVIYAQLDHSGGHHSDKINKSESVVYADIRKN.

Positions 1–35 (MAASAGAGAVIAAPDSRRWLWSVLAAALGLLTAGV) are cleaved as a signal peptide. The Ig-like V-type domain occupies 36-146 (SALEVYTPKE…VKNPPDIVVQ (111 aa)). Over 36–162 (SALEVYTPKE…YVVEKENLPV (127 aa)) the chain is Extracellular. 2 N-linked (GlcNAc...) asparagine glycosylation sites follow: Asn50 and Asn130. Cys58 and Cys135 are disulfide-bonded. The helical transmembrane segment at 163–183 (FPVWVVVGIVTAVVLGLTLLI) threads the bilayer. Over 184–269 (SMILAVLYRR…SVVYADIRKN (86 aa)) the chain is Cytoplasmic. The interval 199–238 (DYTGCSTSESLSPVKQAPRKSPSDTEGLVKSLPSGSHQGP) is disordered. The span at 202-211 (GCSTSESLSP) shows a compositional bias: polar residues. Residues Ser204, Ser206, Ser208, Ser210, Ser219, and Ser221 each carry the phosphoserine modification. The ITIM motif 1 motif lies at 239–244 (VIYAQL). Tyr241 carries the post-translational modification Phosphotyrosine. Ser260 bears the Phosphoserine mark. Residues 261-266 (VVYADI) carry the ITIM motif 2 motif. A Phosphotyrosine modification is found at Tyr263.

Belongs to the myelin P0 protein family. In terms of assembly, interacts with phosphorylated PTPN11/SHP-2. Post-translationally, phosphorylated on tyrosine residues upon stimulation with pervanadate and concanavalin-A (ConA). Phosphorylation at Tyr-241 and Tyr-263 is required for interaction with PTPN11/SHP-2. Dephosphorylated by PTPN11/SHP-2 (in vitro). In terms of processing, N-glycosylated. N-glycosylation is required for concanavalin A binding. As to expression, widely expressed with highest levels in heart, placenta, kidney and pancreas. Isoform 3 is relatively abundant in hematopoietic tissues and fetal liver. Isoform 1 and isoform 3 are expressed in CD14- PB monocytes and pre-B cell progenitors. Isoform 3 appears to be the major isoform in CD34- promyelocytic and promonocytic cells. During differentiation in monocytic cells, the expression level of isoform 3 decreases and that of isoform 1 increases. Isoform 1 is prominent in stromal cells and, to a lesser extent, in umbilical vein endothelial cells and erythroid progenitors. Isoform 2 is expressed in a erythroid progenitor cell line.

The protein localises to the membrane. Its function is as follows. Cell surface receptor, which is involved in signal transduction processes. Recruits PTPN11/SHP-2 to the cell membrane and is a putative substrate of PTPN11/SHP-2. Is a major receptor for concanavalin-A (ConA) and is involved in cellular signaling induced by ConA, which probably includes Src family tyrosine-protein kinases. Isoform 3 seems to have a dominant negative role; it blocks tyrosine phosphorylation of MPZL1 induced by ConA. Isoform 1, but not isoform 2 and isoform 3, may be involved in regulation of integrin-mediated cell motility. The polypeptide is Myelin protein zero-like protein 1 (MPZL1) (Homo sapiens (Human)).